A 367-amino-acid polypeptide reads, in one-letter code: Methylthioribose-1-phosphate isomerase (367 aa).

Substrate-binding positions include 54-56 (RGA), arginine 91, and glutamine 201. Aspartate 242 serves as the catalytic Proton donor. 252 to 253 (NK) serves as a coordination point for substrate.

This sequence belongs to the eIF-2B alpha/beta/delta subunits family. MtnA subfamily.

The enzyme catalyses 5-(methylsulfanyl)-alpha-D-ribose 1-phosphate = 5-(methylsulfanyl)-D-ribulose 1-phosphate. It participates in amino-acid biosynthesis; L-methionine biosynthesis via salvage pathway; L-methionine from S-methyl-5-thio-alpha-D-ribose 1-phosphate: step 1/6. In terms of biological role, catalyzes the interconversion of methylthioribose-1-phosphate (MTR-1-P) into methylthioribulose-1-phosphate (MTRu-1-P). The sequence is that of Methylthioribose-1-phosphate isomerase from Acidiphilium cryptum (strain JF-5).